The sequence spans 398 residues: Dual-specificity RNA methyltransferase RlmN (398 aa).

Residue Glu119 is the Proton acceptor of the active site. Positions Glu125–Asp364 constitute a Radical SAM core domain. Residues Cys132 and Cys369 are joined by a disulfide bond. The [4Fe-4S] cluster site is built by Cys139, Cys143, and Cys146. S-adenosyl-L-methionine is bound by residues Gly193–Glu194, Ser225, Ser247–His249, and Asn326. The active-site S-methylcysteine intermediate is Cys369.

This sequence belongs to the radical SAM superfamily. RlmN family. [4Fe-4S] cluster is required as a cofactor.

The protein localises to the cytoplasm. It carries out the reaction adenosine(2503) in 23S rRNA + 2 reduced [2Fe-2S]-[ferredoxin] + 2 S-adenosyl-L-methionine = 2-methyladenosine(2503) in 23S rRNA + 5'-deoxyadenosine + L-methionine + 2 oxidized [2Fe-2S]-[ferredoxin] + S-adenosyl-L-homocysteine. The enzyme catalyses adenosine(37) in tRNA + 2 reduced [2Fe-2S]-[ferredoxin] + 2 S-adenosyl-L-methionine = 2-methyladenosine(37) in tRNA + 5'-deoxyadenosine + L-methionine + 2 oxidized [2Fe-2S]-[ferredoxin] + S-adenosyl-L-homocysteine. Its function is as follows. Specifically methylates position 2 of adenine 2503 in 23S rRNA and position 2 of adenine 37 in tRNAs. m2A2503 modification seems to play a crucial role in the proofreading step occurring at the peptidyl transferase center and thus would serve to optimize ribosomal fidelity. The protein is Dual-specificity RNA methyltransferase RlmN of Yersinia pestis.